The chain runs to 555 residues: Formate--tetrahydrofolate ligase (555 aa).

Thr65 to Ser72 provides a ligand contact to ATP.

It belongs to the formate--tetrahydrofolate ligase family.

It catalyses the reaction (6S)-5,6,7,8-tetrahydrofolate + formate + ATP = (6R)-10-formyltetrahydrofolate + ADP + phosphate. It participates in one-carbon metabolism; tetrahydrofolate interconversion. The polypeptide is Formate--tetrahydrofolate ligase (Lactococcus lactis subsp. lactis (strain IL1403) (Streptococcus lactis)).